An 851-amino-acid polypeptide reads, in one-letter code: MTSEQIRQTWLNFFKDKGHIIEPSASLIPVDDPTLLWINAGVAPLKKYFDGTETPKSKRITNIQKSIRTNDIDNVGKTARHHTFFEMMGNFSIGDYFKKEAIEFGFELLTSPKYFDIPLDKLYMTYYPTDVEAKNTWLKLGVKEDHLIPVEGNFWEIGAGPSGPDTEIFFDRGTSYDLRGPELIRDDIENERFIEIWNIVFSQYNADPKLKRSEYKELPNKNIDTGAGLERFACVLQGTKTNFETDLHYPVILKVESLSGVKYDGQMAFKVISDHIKTLVFAISDGANLSNEGRGYVLRRILRRAVKYGKSIGFDAPFLHLLVDTVVDMMSNFYTNLIETAVIVKKIILKEEEKFFSTILDGEKHLLQSIKDGKLSGEDAFKLYDTYGFPIELTIEYAEEHGITVDIKGFNEALEVQKSRSRDARKVTHSMKGQDEALLNFDVPSEFVGYDYLQTESKVIKVFDQGIVLDKTPFYANSGGQISDTGSINGLVVRDVIKLPHGQHLHLIETDAFTEGDEVLCIVNQDKRHHTMKNHTATHLLNQALKDTLGSHVKQQGSYNGDLKLTFDINHYETIKDEEILTVEKIVQQKIKEQIDVVTHVLPIDEAKKLGAAMQFGEKYGDIVRVVDVGSWSMEFCGGTHVKNTSDIKNFMITSVESIGSGTYRFEAITGQVLSQVKKIVQNLLDMIHQHIEKIKSLDENHNLKPLPELTGSYQDIINLRLYNQYISNESKVVEKQLEAKLIDQIILQADTFIPKTIEPTTYIYSDNLPQSSLKPLIDVLYDKIKADTVVLLNISEDKASYLVKSSVNEARNVINELNKVLDGRGGGKPDFAQGGTQALDKVQMFLKGKN.

Residues histidine 535, histidine 539, cysteine 637, and histidine 641 each coordinate Zn(2+).

Belongs to the class-II aminoacyl-tRNA synthetase family. Requires Zn(2+) as cofactor.

It localises to the cytoplasm. The catalysed reaction is tRNA(Ala) + L-alanine + ATP = L-alanyl-tRNA(Ala) + AMP + diphosphate. Functionally, catalyzes the attachment of alanine to tRNA(Ala) in a two-step reaction: alanine is first activated by ATP to form Ala-AMP and then transferred to the acceptor end of tRNA(Ala). Also edits incorrectly charged Ser-tRNA(Ala) and Gly-tRNA(Ala) via its editing domain. This is Alanine--tRNA ligase from Acholeplasma laidlawii (strain PG-8A).